Consider the following 438-residue polypeptide: Anaerobic glycerol-3-phosphate dehydrogenase subunit B (438 aa).

The protein belongs to the anaerobic G-3-P dehydrogenase subunit B family. Composed of a catalytic GlpA/B dimer and of membrane bound GlpC. FMN serves as cofactor.

It catalyses the reaction a quinone + sn-glycerol 3-phosphate = dihydroxyacetone phosphate + a quinol. It participates in polyol metabolism; glycerol degradation via glycerol kinase pathway; glycerone phosphate from sn-glycerol 3-phosphate (anaerobic route): step 1/1. Functionally, conversion of glycerol 3-phosphate to dihydroxyacetone. Uses fumarate or nitrate as electron acceptor. This chain is Anaerobic glycerol-3-phosphate dehydrogenase subunit B, found in Vibrio vulnificus (strain YJ016).